Here is a 92-residue protein sequence, read N- to C-terminus: Small ribosomal subunit protein uS19c (92 aa).

The protein belongs to the universal ribosomal protein uS19 family.

It localises to the plastid. It is found in the chloroplast. Its function is as follows. Protein S19 forms a complex with S13 that binds strongly to the 16S ribosomal RNA. The polypeptide is Small ribosomal subunit protein uS19c (Chaetosphaeridium globosum (Charophycean green alga)).